Reading from the N-terminus, the 669-residue chain is MFLLRGRGHWAAASLGRRLPLRRLRSDSAAPCTPHFDVVVIGGGHAGTEAAAAAARCGSRTLLLTHRVDTIGQMSCNPSFGGIGKGHLMREVDALDGLCSRICDQSGIHYKVLNRRKGPAVWGLRAQIDRKLYKQNMQKEILSTPLLTVQKGAVEDLVLAEPEPGYPGKSRVRGVVLADGSTIYAESVILTTGTFLRGMIIIGLEMHPAGRLGDQPSIGLAQTLEKLGFMVGRLKTGTPPRLGKESINFSILNKHTPDDPSIPFSFLSDSVWIKPEDQLPCYLTHTNPRVDAIVLENLHLNSHVQETTKGPRYCPSIESKVLRFPNRLHQVWLEPEGMDSDLIYPQGLSVTLPAELQEKMITCIRGLEKAKMVHPGYGVQYDYLDPRQISPSLETHLVQRLFFAGQINGTTGYEEAAAQGVIAGINASLRVSRKPPFVVSRTEGYIGVLIDDLTTLGTSEPYRMFTSRVEFRLSLRPDNADTRLTFRAHKEAGCVSSQRFERALWMKSSLEEGISVLKSIKFSSSKWKKLIPQIPISINRSLPVSALDVLKYEEVDMESLVGVLPEPLEKYTACRELARRLKIEASYESVLSYQLQEIKEVQQDEALQLPHELDYLTIRDVSLSQEVREKLHLSRPQTIGAASRIPGVTPAAIINLLRFVRSTRQSRQQ.

A mitochondrion-targeting transit peptide spans 1-25 (MFLLRGRGHWAAASLGRRLPLRRLR). FAD-binding positions include 42 to 47 (GGGHAG), Val-154, Ser-217, and Gln-406. An N6-methyllysine modification is found at Lys-507.

The protein belongs to the MnmG family. In terms of assembly, homodimer; forms a dimer in the presence of potassium. Interacts with GTPBP3; forms the GTPBP3-MTO1 complex composed of homodimers of GTPBP3 and MTO1. The cofactor is FAD. As to expression, ubiquitously expressed in various tissues, but with markedly elevated expression in tissues of high metabolic rates.

It is found in the mitochondrion. It carries out the reaction 5,10-methylenetetrahydrofolate + uridine(34) in tRNA + taurine + GTP + A + H2O = 5-taurinomethyluridine(34) in tRNA + 7,8-dihydrofolate + GDP + AH2 + phosphate + H(+). Component of the GTPBP3-MTO1 complex that catalyzes the 5-taurinomethyluridine (taum(5)U) modification at the 34th wobble position (U34) of mitochondrial tRNAs (mt-tRNAs), which plays a role in mt-tRNA decoding and mitochondrial translation. Taum(5)U formation on mammalian mt-tRNA requires the presence of both GTPBP3-mediated GTPase activity and MTO1 catalytic activity. This chain is 5-taurinomethyluridine-[tRNA] synthase subunit MTO1, mitochondrial, found in Mus musculus (Mouse).